The sequence spans 376 residues: Histidinol-phosphate aminotransferase (376 aa).

The interval 1 to 21 (MQPRDLSAHEPYVPGRGTKEV) is disordered. Lysine 222 is modified (N6-(pyridoxal phosphate)lysine).

It belongs to the class-II pyridoxal-phosphate-dependent aminotransferase family. Histidinol-phosphate aminotransferase subfamily. Pyridoxal 5'-phosphate is required as a cofactor.

It carries out the reaction L-histidinol phosphate + 2-oxoglutarate = 3-(imidazol-4-yl)-2-oxopropyl phosphate + L-glutamate. It participates in amino-acid biosynthesis; L-histidine biosynthesis; L-histidine from 5-phospho-alpha-D-ribose 1-diphosphate: step 7/9. The protein is Histidinol-phosphate aminotransferase of Haloquadratum walsbyi (strain DSM 16790 / HBSQ001).